Consider the following 46-residue polypeptide: MTKVRNCVLDALSINVNNIISLVVGTFPQDPTVSKTAVILTILTAT.

This is an uncharacterized protein from Shigella flexneri.